Consider the following 443-residue polypeptide: Phosphoglucosamine mutase (443 aa).

Catalysis depends on S101, which acts as the Phosphoserine intermediate. Mg(2+)-binding residues include S101, D239, D241, and D243. A Phosphoserine modification is found at S101.

This sequence belongs to the phosphohexose mutase family. Mg(2+) serves as cofactor. Activated by phosphorylation.

It catalyses the reaction alpha-D-glucosamine 1-phosphate = D-glucosamine 6-phosphate. Catalyzes the conversion of glucosamine-6-phosphate to glucosamine-1-phosphate. The chain is Phosphoglucosamine mutase from Francisella tularensis subsp. tularensis (strain WY96-3418).